Here is a 215-residue protein sequence, read N- to C-terminus: HTH-type transcriptional repressor FabR (215 aa).

The HTH tetR-type domain occupies 10 to 70 (KTRRSLVEAA…TMVDESGLML (61 aa)). Residues 33-52 (SLREVAREAGIAPTSFYRHF) constitute a DNA-binding region (H-T-H motif).

As to quaternary structure, homodimer.

It localises to the cytoplasm. In terms of biological role, represses the transcription of fabB, involved in unsaturated fatty acid (UFA) biosynthesis. By controlling UFA production, FabR directly influences the physical properties of the membrane bilayer. This is HTH-type transcriptional repressor FabR from Escherichia coli O1:K1 / APEC.